The chain runs to 642 residues: Threonine--tRNA ligase (642 aa).

The segment at Asp239–Pro530 is catalytic. Residues Cys331, His382, and His507 each contribute to the Zn(2+) site.

The protein belongs to the class-II aminoacyl-tRNA synthetase family. In terms of assembly, homodimer. Zn(2+) serves as cofactor.

Its subcellular location is the cytoplasm. It carries out the reaction tRNA(Thr) + L-threonine + ATP = L-threonyl-tRNA(Thr) + AMP + diphosphate + H(+). Catalyzes the attachment of threonine to tRNA(Thr) in a two-step reaction: L-threonine is first activated by ATP to form Thr-AMP and then transferred to the acceptor end of tRNA(Thr). Also edits incorrectly charged L-seryl-tRNA(Thr). This Lawsonia intracellularis (strain PHE/MN1-00) protein is Threonine--tRNA ligase.